The primary structure comprises 406 residues: Acetylornithine/succinyldiaminopimelate aminotransferase (406 aa).

Pyridoxal 5'-phosphate contacts are provided by residues 108-109 and Phe-141; that span reads GT. Arg-144 is a N(2)-acetyl-L-ornithine binding site. Position 226–229 (226–229) interacts with pyridoxal 5'-phosphate; it reads DEVQ. At Lys-255 the chain carries N6-(pyridoxal phosphate)lysine. Position 283 (Ser-283) interacts with N(2)-acetyl-L-ornithine. Residue Thr-284 participates in pyridoxal 5'-phosphate binding.

This sequence belongs to the class-III pyridoxal-phosphate-dependent aminotransferase family. ArgD subfamily. Homodimer. The cofactor is pyridoxal 5'-phosphate.

The protein resides in the cytoplasm. It carries out the reaction N(2)-acetyl-L-ornithine + 2-oxoglutarate = N-acetyl-L-glutamate 5-semialdehyde + L-glutamate. The enzyme catalyses N-succinyl-(2S,6S)-2,6-diaminopimelate + 2-oxoglutarate = (S)-2-succinylamino-6-oxoheptanedioate + L-glutamate. It participates in amino-acid biosynthesis; L-arginine biosynthesis; N(2)-acetyl-L-ornithine from L-glutamate: step 4/4. The protein operates within amino-acid biosynthesis; L-lysine biosynthesis via DAP pathway; LL-2,6-diaminopimelate from (S)-tetrahydrodipicolinate (succinylase route): step 2/3. Its function is as follows. Involved in both the arginine and lysine biosynthetic pathways. The polypeptide is Acetylornithine/succinyldiaminopimelate aminotransferase (Escherichia coli (strain K12)).